Here is a 400-residue protein sequence, read N- to C-terminus: tRNA (guanine-N(7)-)-methyltransferase (400 aa).

Residues glutamate 124, glutamate 149, and aspartate 176 each coordinate S-adenosyl-L-methionine. Aspartate 232 is a substrate binding site.

It belongs to the class I-like SAM-binding methyltransferase superfamily. TrmB family.

The enzyme catalyses guanosine(46) in tRNA + S-adenosyl-L-methionine = N(7)-methylguanosine(46) in tRNA + S-adenosyl-L-homocysteine. The protein operates within tRNA modification; N(7)-methylguanine-tRNA biosynthesis. In terms of biological role, catalyzes the formation of N(7)-methylguanine at position 46 (m7G46) in tRNA. This is tRNA (guanine-N(7)-)-methyltransferase from Helicobacter pylori (strain J99 / ATCC 700824) (Campylobacter pylori J99).